The primary structure comprises 475 residues: Membrane-bound lytic murein transglycosylase F (475 aa).

An N-terminal signal peptide occupies residues 1 to 30 (MKKLKINYLFIGILTLLLAAALWPSIPWFG). Residues 31 to 269 (KTENHIAAIQ…RIEEKYLGHG (239 aa)) are non-LT domain. The interval 270-475 (DDFDYVDTRS…MKLAQDYPAV (206 aa)) is LT domain. E314 is a catalytic residue.

This sequence in the N-terminal section; belongs to the bacterial solute-binding protein 3 family. It in the C-terminal section; belongs to the transglycosylase Slt family.

It is found in the cell outer membrane. The enzyme catalyses Exolytic cleavage of the (1-&gt;4)-beta-glycosidic linkage between N-acetylmuramic acid (MurNAc) and N-acetylglucosamine (GlcNAc) residues in peptidoglycan, from either the reducing or the non-reducing ends of the peptidoglycan chains, with concomitant formation of a 1,6-anhydrobond in the MurNAc residue.. In terms of biological role, murein-degrading enzyme that degrades murein glycan strands and insoluble, high-molecular weight murein sacculi, with the concomitant formation of a 1,6-anhydromuramoyl product. Lytic transglycosylases (LTs) play an integral role in the metabolism of the peptidoglycan (PG) sacculus. Their lytic action creates space within the PG sacculus to allow for its expansion as well as for the insertion of various structures such as secretion systems and flagella. The polypeptide is Membrane-bound lytic murein transglycosylase F (Salmonella typhi).